A 136-amino-acid polypeptide reads, in one-letter code: MARVTVEDCIEKVENRFELVLLASHRARLLAAGAPLTVERDRDKNPVVALREIGDETITAEDLKEQLIHSMQKYVEVDEPEAETVPLLSSSPAAAAVAPQSSSDDKDVQFDRMSEEDLLRGLENLAPPTETDDEGE.

The span at 90–102 (SSPAAAAVAPQSS) shows a compositional bias: low complexity. The tract at residues 90 to 136 (SSPAAAAVAPQSSSDDKDVQFDRMSEEDLLRGLENLAPPTETDDEGE) is disordered. Basic and acidic residues predominate over residues 103–120 (SDDKDVQFDRMSEEDLLR).

The protein belongs to the RNA polymerase subunit omega family. In terms of assembly, the RNAP catalytic core consists of 2 alpha, 1 beta, 1 beta' and 1 omega subunit. When a sigma factor is associated with the core the holoenzyme is formed, which can initiate transcription.

It catalyses the reaction RNA(n) + a ribonucleoside 5'-triphosphate = RNA(n+1) + diphosphate. In terms of biological role, promotes RNA polymerase assembly. Latches the N- and C-terminal regions of the beta' subunit thereby facilitating its interaction with the beta and alpha subunits. This is DNA-directed RNA polymerase subunit omega from Methylorubrum populi (strain ATCC BAA-705 / NCIMB 13946 / BJ001) (Methylobacterium populi).